A 252-amino-acid polypeptide reads, in one-letter code: Trans-aconitate 2-methyltransferase (252 aa).

Belongs to the methyltransferase superfamily. Tam family.

The protein resides in the cytoplasm. It catalyses the reaction trans-aconitate + S-adenosyl-L-methionine = (E)-3-(methoxycarbonyl)pent-2-enedioate + S-adenosyl-L-homocysteine. Functionally, catalyzes the S-adenosylmethionine monomethyl esterification of trans-aconitate. The polypeptide is Trans-aconitate 2-methyltransferase (Escherichia fergusonii (strain ATCC 35469 / DSM 13698 / CCUG 18766 / IAM 14443 / JCM 21226 / LMG 7866 / NBRC 102419 / NCTC 12128 / CDC 0568-73)).